Consider the following 290-residue polypeptide: Bifunctional protein FolD (290 aa).

NADP(+) is bound by residues 167–169 (GRS), S192, and I233.

This sequence belongs to the tetrahydrofolate dehydrogenase/cyclohydrolase family. In terms of assembly, homodimer.

The enzyme catalyses (6R)-5,10-methylene-5,6,7,8-tetrahydrofolate + NADP(+) = (6R)-5,10-methenyltetrahydrofolate + NADPH. The catalysed reaction is (6R)-5,10-methenyltetrahydrofolate + H2O = (6R)-10-formyltetrahydrofolate + H(+). The protein operates within one-carbon metabolism; tetrahydrofolate interconversion. Functionally, catalyzes the oxidation of 5,10-methylenetetrahydrofolate to 5,10-methenyltetrahydrofolate and then the hydrolysis of 5,10-methenyltetrahydrofolate to 10-formyltetrahydrofolate. The sequence is that of Bifunctional protein FolD from Gloeobacter violaceus (strain ATCC 29082 / PCC 7421).